The sequence spans 275 residues: 6-deoxy-6-sulfo-D-fructose transketolase subunit SqwG (275 aa).

Belongs to the transketolase family. In terms of assembly, forms a complex with SqwH. The cofactor is thiamine diphosphate.

It catalyses the reaction 6-deoxy-6-sulfo-D-fructose + D-glyceraldehyde 3-phosphate = 4-deoxy-4-sulfo-D-erythrose + D-xylulose 5-phosphate. The catalysed reaction is 4-deoxy-4-sulfo-D-erythrulose + D-glyceraldehyde 3-phosphate = sulfoacetaldehyde + D-xylulose 5-phosphate. Part of the sulfo-TK pathway, a D-sulfoquinovose degradation pathway that produces 2-hydroxyethane-1-sulfonate (isethionate). Catalyzes two steps of the pathway: the formation of 4-deoxy-4-sulfoerythrose (SE) and xylulose 5-phosphate from 6-deoxy-6-sulfo-D-fructose (SF) and glyceraldehyde 3-phosphate, and the formation of sulfoacetaldehyde (SA) and xylulose 5-phosphate from 4-deoxy-4-sulfo-D-erythrulose (SEu) and glyceraldehyde 3-phosphate. The chain is 6-deoxy-6-sulfo-D-fructose transketolase subunit SqwG from Clostridium sp. (strain MSTE9).